Consider the following 381-residue polypeptide: L-lactate dehydrogenase (381 aa).

The region spanning 1 to 380 (MIISSASDYR…KPEALVDLSK (380 aa)) is the FMN hydroxy acid dehydrogenase domain. Tyrosine 24 contributes to the substrate binding site. The FMN site is built by serine 106 and glutamine 127. Tyrosine 129 is a binding site for substrate. FMN is bound at residue threonine 155. Arginine 164 is a substrate binding site. Lysine 251 is an FMN binding site. Histidine 275 (proton acceptor) is an active-site residue. Substrate is bound at residue arginine 278. FMN is bound at residue 306–330 (DSGIRNGLDIVRMLALGADATMLGR).

It belongs to the FMN-dependent alpha-hydroxy acid dehydrogenase family. FMN is required as a cofactor.

Its subcellular location is the cell inner membrane. It carries out the reaction (S)-lactate + A = pyruvate + AH2. Its function is as follows. Catalyzes the conversion of L-lactate to pyruvate. Is coupled to the respiratory chain. This Haemophilus influenzae (strain PittEE) protein is L-lactate dehydrogenase.